Reading from the N-terminus, the 435-residue chain is Amidase 1 (435 aa).

Residues K38 and S115 each act as charge relay system in the active site. S139 (acyl-ester intermediate) is an active-site residue.

The protein belongs to the amidase family.

It localises to the cytoplasm. Its subcellular location is the nucleus. It is found in the nucleoplasm. It carries out the reaction a monocarboxylic acid amide + H2O = a monocarboxylate + NH4(+). Amidase involved in auxin biosynthesis. Converts indole-3-acetamide (IAM) to indole-3-acetate, and phenyl-2-acetamide (PAM) to phenyl-2-acetate. Substrate preference is PAM &gt; IAM. The chain is Amidase 1 from Oryza sativa subsp. japonica (Rice).